The primary structure comprises 463 residues: Lysosomal proton-coupled steroid conjugate and bile acid symporter SLC46A3 (463 aa).

A signal peptide spans 1-20 (MKILFVEPAIFLSAFAMTLT). Residues 21 to 73 (SPLTTQYVYRRIWEETGNYTFSSDSNISECEKNKSSPIFAFQEEVQKKVSRFN) lie on the Extracellular side of the membrane. N-linked (GlcNAc...) asparagine glycosylation is found at asparagine 38, asparagine 46, and asparagine 53. Residues 74–94 (LQMDISGLIPGLVSTFILLSI) traverse the membrane as a helical segment. At 95 to 101 (SDHYGRK) the chain is on the cytoplasmic side. A helical transmembrane segment spans residues 102–124 (FPMILSSVGALATSVWLCLLCYF). The Extracellular segment spans residues 125–133 (AFPFQLLIA). A helical transmembrane segment spans residues 134–156 (STFIGAFCGNYTTFWGACFAYIV). Topologically, residues 157–170 (DQCKEHKQKTIRIA) are cytoplasmic. A helical transmembrane segment spans residues 171–191 (VIDFLLGLVTGLTGLSSGYFI). Over 192–197 (RELGFG) the chain is Extracellular. The chain crosses the membrane as a helical span at residues 198-218 (WSFLIIAASLAVNLIYILFFL). Residues 219–261 (GDPVKECSSQNVTMSCSEGFKNLFYRTYMLFKNASGKRRFLLC) are Cytoplasmic-facing. Residues 262–282 (LLLFTTITYFFVVIGIAPIFI) form a helical membrane-spanning segment. The Extracellular portion of the chain corresponds to 283–294 (LYELDSPLCWNE). The helical transmembrane segment at 295-315 (VFIGYGSALGSASFLTSFLGI) threads the bilayer. Topologically, residues 316 to 324 (WLFSYCMED) are cytoplasmic. Residues 325–345 (IHMAFIGIFTTMTGMVMTAFA) form a helical membrane-spanning segment. The Extracellular portion of the chain corresponds to 346–347 (ST). A helical transmembrane segment spans residues 348-368 (TLMMFLARVPFLFTIVPFSVL). The Cytoplasmic portion of the chain corresponds to 369 to 382 (RSMLSKVVRSTEQG). Residues 383–403 (ILFACIAFLETLGGVTAVSTF) traverse the membrane as a helical segment. Residues 404 to 415 (NGIYSATVAWYP) lie on the Extracellular side of the membrane. Residues 416-436 (GFTFLLSAGLLLLPAISLCVV) form a helical membrane-spanning segment. Residues 437-463 (KCTSWNEGSYELLIQEESSEDASDRAC) lie on the Cytoplasmic side of the membrane. Positions 446–449 (YELL) match the Tyrosine-based lysosomal-sorting motif motif.

It belongs to the major facilitator superfamily. SLC46A family.

Its subcellular location is the lysosome membrane. It carries out the reaction estrone 3-sulfate(out) + n H(+)(out) = estrone 3-sulfate(in) + n H(+)(in). It catalyses the reaction 25-hydroxyvitamin D3 sulfate(out) + n H(+)(out) = 25-hydroxyvitamin D3 sulfate(in) + n H(+)(in). The catalysed reaction is cholate(out) + n H(+)(out) = cholate(in) + n H(+)(in). The enzyme catalyses glycocholate(out) + n H(+)(out) = glycocholate(in) + n H(+)(in). It carries out the reaction taurocholate(out) + n H(+)(out) = taurocholate(in) + n H(+)(in). It catalyses the reaction dehydroepiandrosterone 3-sulfate(out) + n H(+)(out) = dehydroepiandrosterone 3-sulfate(in) + n H(+)(in). The catalysed reaction is N-acetyl-D-muramoyl-L-alanyl-D-isoglutamine(out) + n H(+)(out) = N-acetyl-D-muramoyl-L-alanyl-D-isoglutamine(in) + n H(+)(in). The enzyme catalyses 2',3'-cGAMP(out) + n H(+)(out) = 2',3'-cGAMP(in) + n H(+)(in). Functionally, lysosomal proton-coupled steroid conjugate and bile acid transporter. Preferentially recognizes lipophilic steroid conjugates or bile acis as endogenous substrates and seems to mediate escape from lysosomes to the cytoplasm. Modulates hepatic cytosolic copper homeostasis, maybe acting as a lysosomal copper transporter and sequestering copper ions in the lysosome. Delivers pathogen-associated molecular patterns to cytosolic pattern recognition receptors as part of the innate immune response to microbes. Selectively transports bacterial muramyl dipeptide (MDP) into the cytosol for recognition by NOD2, triggering inflammatory responses. Likely acts as a redundant importer of cyclic GMP-AMP dinucleotides (cGAMPs) in monocyte and macrophage cell lineages. The transport mechanism, its electrogenicity and stoichiometry remain to be elucidated. This Pongo abelii (Sumatran orangutan) protein is Lysosomal proton-coupled steroid conjugate and bile acid symporter SLC46A3 (SLC46A3).